The following is a 129-amino-acid chain: Small ribosomal subunit protein uS11 (129 aa).

The protein belongs to the universal ribosomal protein uS11 family. Part of the 30S ribosomal subunit. Interacts with proteins S7 and S18. Binds to IF-3.

In terms of biological role, located on the platform of the 30S subunit, it bridges several disparate RNA helices of the 16S rRNA. Forms part of the Shine-Dalgarno cleft in the 70S ribosome. This Nitrosomonas europaea (strain ATCC 19718 / CIP 103999 / KCTC 2705 / NBRC 14298) protein is Small ribosomal subunit protein uS11.